The sequence spans 48 residues: Ambineela (48 aa).

In terms of assembly, monomer. The blue color is due to an unidentified non-fluorescent cofactor, covalently bound to it.

Ambineela is a blue protein and has a pI of 8.7. The polypeptide is Ambineela (Acidianus ambivalens (Desulfurolobus ambivalens)).